We begin with the raw amino-acid sequence, 196 residues long: Corrinoid adenosyltransferase CobA (196 aa).

ATP is bound at residue 36–42 (GNGKGKT).

It belongs to the Cob(I)alamin adenosyltransferase family. Homodimer.

It is found in the cytoplasm. The catalysed reaction is 2 cob(II)yrinate a,c diamide + reduced [electron-transfer flavoprotein] + 2 ATP = 2 adenosylcob(III)yrinate a,c-diamide + 2 triphosphate + oxidized [electron-transfer flavoprotein] + 3 H(+). The enzyme catalyses 2 cob(II)alamin + reduced [electron-transfer flavoprotein] + 2 ATP = 2 adenosylcob(III)alamin + 2 triphosphate + oxidized [electron-transfer flavoprotein] + 3 H(+). The protein operates within cofactor biosynthesis; adenosylcobalamin biosynthesis; adenosylcobalamin from cob(II)yrinate a,c-diamide: step 2/7. In terms of biological role, required for both de novo synthesis of the corrin ring for the assimilation of exogenous corrinoids. Participates in the adenosylation of a variety of incomplete and complete corrinoids. The polypeptide is Corrinoid adenosyltransferase CobA (btuR) (Salmonella typhimurium (strain LT2 / SGSC1412 / ATCC 700720)).